An 88-amino-acid chain; its full sequence is Small ribosomal subunit protein bS20 (88 aa).

The tract at residues 1–21 is disordered; sequence MANTTSAKKATRKIARRTAVN.

The protein belongs to the bacterial ribosomal protein bS20 family.

Its function is as follows. Binds directly to 16S ribosomal RNA. The protein is Small ribosomal subunit protein bS20 of Agrobacterium fabrum (strain C58 / ATCC 33970) (Agrobacterium tumefaciens (strain C58)).